A 107-amino-acid chain; its full sequence is Integration host factor subunit alpha (107 aa).

This sequence belongs to the bacterial histone-like protein family. In terms of assembly, heterodimer of an alpha and a beta chain.

In terms of biological role, this protein is one of the two subunits of integration host factor, a specific DNA-binding protein that functions in genetic recombination as well as in transcriptional and translational control. The sequence is that of Integration host factor subunit alpha from Brucella abortus (strain S19).